The following is a 252-amino-acid chain: Chitooligosaccharide deacetylase (252 aa).

H61 and H125 together coordinate Mg(2+).

It belongs to the YdjC deacetylase family. ChbG subfamily. In terms of assembly, homodimer. The cofactor is Mg(2+).

The protein localises to the cytoplasm. The catalysed reaction is N,N'-diacetylchitobiose + H2O = N-acetyl-beta-D-glucosaminyl-(1-&gt;4)-D-glucosamine + acetate. It catalyses the reaction diacetylchitobiose-6'-phosphate + H2O = N'-monoacetylchitobiose-6'-phosphate + acetate. The protein operates within glycan degradation; chitin degradation. In terms of biological role, involved in the degradation of chitin. ChbG is essential for growth on the acetylated chitooligosaccharides chitobiose and chitotriose but is dispensable for growth on cellobiose and chitosan dimer, the deacetylated form of chitobiose. Deacetylation of chitobiose-6-P and chitotriose-6-P is necessary for both the activation of the chb promoter by the regulatory protein ChbR and the hydrolysis of phosphorylated beta-glucosides by the phospho-beta-glucosidase ChbF. Catalyzes the removal of only one acetyl group from chitobiose-6-P to yield monoacetylchitobiose-6-P, the inducer of ChbR and the substrate of ChbF. The protein is Chitooligosaccharide deacetylase of Enterobacter sp. (strain 638).